The sequence spans 1165 residues: TBC1 domain family member 1 (1165 aa).

Serine 146 bears the Phosphoserine mark. Residues 207-234 form a disordered region; the sequence is FSSDQSRSALQPPGDGERGPRPMRKSFS. Serine 232 is modified (phosphoserine; by PKB/AKT1). Serine 234 is modified (phosphoserine; by AMPK). Residues 243–401 form the PID domain; the sequence is FRKEFQDAGL…LHKLCERIEG (159 aa). Phosphoserine is present on serine 500. Threonine 502 bears the Phosphothreonine; by PKB/AKT1 mark. Residues serine 504, serine 522, serine 524, serine 562, serine 563, serine 567, serine 568, and serine 582 each carry the phosphoserine modification. Threonine 593 is subject to Phosphothreonine. Serine 611 bears the Phosphoserine mark. Phosphoserine; by PKB/AKT1 is present on serine 624. The disordered stretch occupies residues 624 to 651; sequence SVSTETPHERKDFESKADHISDASRTPV. Residues 629–645 show a composition bias toward basic and acidic residues; that stretch reads TPHERKDFESKADHISD. A phosphoserine mark is found at serine 692 and serine 938. In terms of domain architecture, Rab-GAP TBC spans 797 to 991; that stretch reads GVPRHHRGEI…RVFDMIFLQG (195 aa). Tyrosine 949 bears the Phosphotyrosine mark. The disordered stretch occupies residues 1146 to 1165; it reads QTAELGSQESDPTLPKPSGD.

Interacts with APPL2 (via BAR domain); interaction is dependent of TBC1D1 phosphorylation at Ser-232; interaction diminishes the phosphorylation of TBC1D1 at Thr-593, resulting in inhibition of SLC2A4/GLUT4 translocation and glucose uptake. In terms of processing, insulin-stimulated phosphorylation by AKT family kinases stimulates SLC2A4/GLUT4 translocation.

The protein resides in the nucleus. In terms of biological role, may act as a GTPase-activating protein for Rab family protein(s). May play a role in the cell cycle and differentiation of various tissues. Involved in the trafficking and translocation of GLUT4-containing vesicles and insulin-stimulated glucose uptake into cells. This chain is TBC1 domain family member 1 (TBC1D1), found in Bos taurus (Bovine).